Here is a 130-residue protein sequence, read N- to C-terminus: Small ribosomal subunit protein uS11c (130 aa).

Belongs to the universal ribosomal protein uS11 family. In terms of assembly, part of the 30S ribosomal subunit.

It is found in the plastid. The protein resides in the chloroplast. This is Small ribosomal subunit protein uS11c from Pinus thunbergii (Japanese black pine).